Reading from the N-terminus, the 351-residue chain is uncharacterized protein (351 aa).

Belongs to the bacterial luciferase oxidoreductase family.

This is an uncharacterized protein from Sinorhizobium fredii (strain NBRC 101917 / NGR234).